A 371-amino-acid polypeptide reads, in one-letter code: Methylthioribose-1-phosphate isomerase (371 aa).

Substrate is bound by residues 53–55 (RGA), Arg90, and Gln203. Catalysis depends on Asp243, which acts as the Proton donor. 253 to 254 (NK) serves as a coordination point for substrate.

It belongs to the eIF-2B alpha/beta/delta subunits family. MtnA subfamily.

The enzyme catalyses 5-(methylsulfanyl)-alpha-D-ribose 1-phosphate = 5-(methylsulfanyl)-D-ribulose 1-phosphate. The catalysed reaction is 5-deoxy-alpha-D-ribose 1-phosphate = 5-deoxy-D-ribulose 1-phosphate. Its pathway is amino-acid biosynthesis; L-methionine biosynthesis via salvage pathway; L-methionine from S-methyl-5-thio-alpha-D-ribose 1-phosphate: step 1/6. Catalyzes the interconversion of methylthioribose-1-phosphate (MTR-1-P) into methylthioribulose-1-phosphate (MTRu-1-P). Also catalyzes the interconversion of 5-deoxyribose 1-phosphate and 5-deoxyribulose 1-phosphate. Part of a bifunctional DHAP-shunt salvage pathway for SAM by-products. The sequence is that of Methylthioribose-1-phosphate isomerase from Escherichia coli O45:K1 (strain S88 / ExPEC).